A 275-amino-acid polypeptide reads, in one-letter code: Nurim (275 aa).

At 1 to 4 the chain is on the nuclear side; it reads MASV. Residues 5-32 form a helical membrane-spanning segment; that stretch reads TFRDGFLCVSALITFVFVFVTGADFVRF. At 33 to 63 the chain is on the perinuclear space side; it reads VSFRAINHNLSGAAPLCRDSVPWSVALRDGV. The helical transmembrane segment at 64-85 threads the bilayer; sequence VQKAVAVDVLLLVVFSLQHSLL. Over 86–102 the chain is Nuclear; sequence AWTPVKRVCQSVFGVLS. Residues 103–119 traverse the membrane as a helical segment; the sequence is RSVYCFTTAAALQILMH. Residues 120–138 are Perinuclear space-facing; sequence YWRPVTSAPCLWSVSSAPW. A helical transmembrane segment spans residues 139 to 169; sequence EIWFPLICFIVHFLCWAIICSILLIFDYPEL. Topologically, residues 170 to 196 are nuclear; the sequence is LGIKQVYYECLGLGDPLLLKSERAQRL. The helical transmembrane segment at 197-215 threads the bilayer; sequence YSHLRHPVCVELLTVLWLL. Topologically, residues 216–221 are perinuclear space; the sequence is PSFPLD. A helical transmembrane segment spans residues 222 to 239; that stretch reads RLLLAVFLTVYLILAHSL. Over 240-275 the chain is Nuclear; that stretch reads DKQDCAYLRHQLRNKLQLFSTPLEGSEQTNDNNKLE.

Belongs to the nurim family.

The protein localises to the nucleus inner membrane. The sequence is that of Nurim (nrm) from Danio rerio (Zebrafish).